The following is a 1678-amino-acid chain: Clathrin heavy chain (1678 aa).

WD40-like repeat stretches follow at residues 24–67 (SFSF…RPIS), 68–107 (ADSA…MNED), 108–149 (VVFW…SSLN), 150–195 (GCQI…QAIE), 196–257 (GHAA…PEAQ), 258–301 (NDFP…ISAD), and 302–330 (TIFV…VTVD). CHCR repeat units lie at residues 538 to 684 (VAEE…QICV), 687 to 829 (ATKY…SEDI), 834 to 973 (ILVV…QLID), 980 to 1125 (LSET…VKEA), 1129 to 1270 (YIKA…FRLA), 1275 to 1421 (LHIV…LLLN), and 1424 to 1567 (LLVL…YDCF). The involved in binding clathrin light chain stretch occupies residues 1334–1643 (REHLELFWSR…IQMEPQLMIT (310 aa)). Residues 1552-1677 (EELLGWFLER…AGGRNMGYPY (126 aa)) are trimerization.

The protein belongs to the clathrin heavy chain family. In terms of assembly, clathrin triskelions, composed of 3 heavy chains and 3 light chains, are the basic subunits of the clathrin coat. Interacts with sau.

It is found in the cytoplasmic vesicle membrane. The protein resides in the membrane. Its subcellular location is the coated pit. Its function is as follows. Clathrin is the major protein of the polyhedral coat of coated pits and vesicles. This Drosophila melanogaster (Fruit fly) protein is Clathrin heavy chain (Chc).